A 362-amino-acid chain; its full sequence is Solute carrier family 25 member 3 (362 aa).

Residues 1–49 constitute a mitochondrion transit peptide; it reads MYSSVVHLARANPFNAPHLQLVHDGLAGPRSDPAGPPGPPRRSRNLAAA. Over 50 to 63 the chain is Mitochondrial intermembrane; the sequence is AVEEQYSCDYGSGR. Solcar repeat units follow at residues 63 to 147, 160 to 244, and 261 to 339; these read RFFI…FKVL, WRTS…TVEA, and EQLV…VKVY. The chain crosses the membrane as a helical span at residues 64-86; sequence FFILCGLGGIISCGTTHTALVPL. The Mitochondrial matrix segment spans residues 87–121; that stretch reads DLVKCRMQVDPQKYKSIFNGFSVTLKEDGFRGLAK. Lysine 99 carries the N6-acetyllysine modification. Lysine 112 is modified (N6-methyllysine). The chain crosses the membrane as a helical span at residues 122 to 141; sequence GWAPTFIGYSLQGLCKFGFY. Residues 142-161 lie on the Mitochondrial intermembrane side of the membrane; the sequence is EVFKVLYSNMLGEENAYLWR. Residues 162 to 183 form a helical membrane-spanning segment; that stretch reads TSLYLAASASAEFFADIALAPM. Residues 184–218 are Mitochondrial matrix-facing; sequence EAAKVRIQTQPGYANTLRDAAPKMYKEEGLKAFYK. Tyrosine 196 is modified (phosphotyrosine). An N6-acetyllysine modification is found at lysine 209. A helical transmembrane segment spans residues 219 to 238; the sequence is GVAPLWMRQIPYTMMKFACF. Residues 239–261 lie on the Mitochondrial intermembrane side of the membrane; that stretch reads ERTVEALYKFVVPKPRSECSKPE. Residues 262–284 form a helical membrane-spanning segment; sequence QLVVTFVAGYIAGVFCAIVSHPA. Residues 285 to 314 are Mitochondrial matrix-facing; that stretch reads DSVVSVLNKEKGSSASEVLKRLGFRGVWKG. Residues 315–333 traverse the membrane as a helical segment; the sequence is LFARIIMIGTLTALQWFIY. The Mitochondrial intermembrane portion of the chain corresponds to 334 to 362; sequence DSVKVYFRLPRPPPPEMPESLKKKLGYTQ.

It belongs to the mitochondrial carrier (TC 2.A.29) family. As to quaternary structure, interacts with PPIF; the interaction is impaired by CsA. In terms of tissue distribution, expressed in heart, diaphragm and skeletal muscle (at protein level). Not detected in liver, lung, brain, and kidney (at protein level). As to expression, ubiquitous (at protein level).

It is found in the mitochondrion inner membrane. It carries out the reaction phosphate(in) + H(+)(in) = phosphate(out) + H(+)(out). With respect to regulation, up-regulated in the presence of cardiolipin. Its function is as follows. Inorganic ion transporter that transports phosphate or copper ions across the mitochondrial inner membrane into the matrix compartment. Mediates proton-coupled symport of phosphate ions necessary for mitochondrial oxidative phosphorylation of ADP to ATP. Transports copper ions probably in the form of anionic copper(I) complexes to maintain mitochondrial matrix copper pool and to supply copper for cytochrome C oxidase complex assembly. May also play a role in regulation of the mitochondrial permeability transition pore (mPTP). The sequence is that of Solute carrier family 25 member 3 from Bos taurus (Bovine).